We begin with the raw amino-acid sequence, 330 residues long: Methylthioribose-1-phosphate isomerase (330 aa).

Substrate-binding positions include 49–51 (RGA), arginine 83, and glutamine 179. Aspartate 220 acts as the Proton donor in catalysis. Position 230–231 (230–231 (NK)) interacts with substrate.

Belongs to the eIF-2B alpha/beta/delta subunits family. MtnA subfamily.

It carries out the reaction 5-(methylsulfanyl)-alpha-D-ribose 1-phosphate = 5-(methylsulfanyl)-D-ribulose 1-phosphate. Its pathway is amino-acid biosynthesis; L-methionine biosynthesis via salvage pathway; L-methionine from S-methyl-5-thio-alpha-D-ribose 1-phosphate: step 1/6. Catalyzes the interconversion of methylthioribose-1-phosphate (MTR-1-P) into methylthioribulose-1-phosphate (MTRu-1-P). In Thermus thermophilus (strain ATCC 27634 / DSM 579 / HB8), this protein is Methylthioribose-1-phosphate isomerase.